The chain runs to 420 residues: Ribulose bisphosphate carboxylase (420 aa).

Lys-155 functions as the Proton acceptor in the catalytic mechanism. Lys-157 is a substrate binding site. Residues Lys-181, Asp-183, and Glu-184 each contribute to the Mg(2+) site. Lys-181 carries the post-translational modification N6-carboxylysine. His-273 functions as the Proton acceptor in the catalytic mechanism. Substrate is bound by residues Arg-274, His-306, 343–345 (SGG), and 365–368 (QAGG).

Belongs to the RuBisCO large chain family. Type III subfamily. In terms of assembly, homodimer or homodecamer. In contrast to form I RuBisCO, the form III RuBisCO is composed solely of large subunits. The cofactor is Mg(2+).

It catalyses the reaction 2 (2R)-3-phosphoglycerate + 2 H(+) = D-ribulose 1,5-bisphosphate + CO2 + H2O. It carries out the reaction D-ribulose 1,5-bisphosphate + O2 = 2-phosphoglycolate + (2R)-3-phosphoglycerate + 2 H(+). Catalyzes the addition of molecular CO(2) and H(2)O to ribulose 1,5-bisphosphate (RuBP), generating two molecules of 3-phosphoglycerate (3-PGA). Functions in an archaeal AMP degradation pathway, together with AMP phosphorylase and R15P isomerase. This chain is Ribulose bisphosphate carboxylase, found in Pyrococcus furiosus (strain ATCC 43587 / DSM 3638 / JCM 8422 / Vc1).